A 155-amino-acid chain; its full sequence is Reticulon-like protein B23 (155 aa).

Residues 1 to 155 (MGEMGKAIGL…LNRRNGEILD (155 aa)) form the Reticulon domain. A run of 2 helical transmembrane segments spans residues 30-50 (SLISDVLIVLLSSLAILGLLF) and 117-137 (IISGVTIAYAGLCLFCLSMLF).

It localises to the endoplasmic reticulum membrane. The sequence is that of Reticulon-like protein B23 (RTNLB23) from Arabidopsis thaliana (Mouse-ear cress).